The sequence spans 449 residues: Wilms tumor protein (449 aa).

Residues 48-84 form a disordered region; the sequence is YGSLGGPAPPPAPPPPPPPPPHSFIKQEPSWGGAEPH. Residues 54-69 are compositionally biased toward pro residues; the sequence is PAPPPAPPPPPPPPPH. Glycyl lysine isopeptide (Lys-Gly) (interchain with G-Cter in SUMO) cross-links involve residues Lys-73 and Lys-177. The 9aaTAD signature appears at 236 to 244; sequence MTWNQMNLG. 3 consecutive C2H2-type zinc fingers follow at residues 323–347, 353–377, and 383–405; these read FMCA…SRKH, YQCD…QRRH, and FQCK…TRTH. Important for interaction with target DNA stretches follow at residues 367-381 and 393-401; these read SDQL…TGVK and SRSDHLKTH. The KTS motif signature appears at 408 to 410; the sequence is KTS. The C2H2-type 4 zinc-finger motif lies at 414–438; the sequence is FSCRWPSCQKKFARSDELVRHHNMH. Lys-444 is covalently cross-linked (Glycyl lysine isopeptide (Lys-Gly) (interchain with G-Cter in SUMO2)).

Belongs to the EGR C2H2-type zinc-finger protein family. As to quaternary structure, homodimer. Interacts with WTIP. Interacts with actively translating polysomes. Detected in nuclear ribonucleoprotein (mRNP) particles. Interacts with HNRNPU via the zinc-finger region. Interacts with U2AF2. Interacts with CITED2. Interacts with ZNF224 via the zinc-finger region. Interacts with WTAP and SRY. Interacts with AMER1. Interacts with RBM4. Expressed in the kidney and a subset of hematopoietic cells.

It localises to the nucleus. The protein localises to the nucleolus. Its subcellular location is the cytoplasm. It is found in the nucleus speckle. The protein resides in the nucleoplasm. Its function is as follows. Transcription factor that plays an important role in cellular development and cell survival. Recognizes and binds to the DNA sequence 5'-GCG(T/G)GGGCG-3'. Regulates the expression of numerous target genes, including EPO. Plays an essential role for development of the urogenital system. It has a tumor suppressor as well as an oncogenic role in tumor formation. Function may be isoform-specific: isoforms lacking the KTS motif may act as transcription factors. Isoforms containing the KTS motif may bind mRNA and play a role in mRNA metabolism or splicing. Isoform 1 has lower affinity for DNA, and can bind RNA. The polypeptide is Wilms tumor protein (WT1) (Homo sapiens (Human)).